Consider the following 86-residue polypeptide: MKTLLLTLAVVTMVCMDLGYTTICYNHLSRTPETTEICPDSWYFCYKISLADGNDVRIKRGCTFTCPELRPTGKYVYCCRRDKCNQ.

The first 21 residues, 1–21, serve as a signal peptide directing secretion; it reads MKTLLLTLAVVTMVCMDLGYT. 4 disulfides stabilise this stretch: Cys24/Cys45, Cys38/Cys62, Cys66/Cys78, and Cys79/Cys84.

Belongs to the three-finger toxin family. Short-chain subfamily. Orphan group VIII (haditoxin) sub-subfamily. In terms of assembly, homodimer; non-covalently linked. As to expression, expressed by the venom gland.

The protein resides in the secreted. Its function is as follows. Antagonist of muscle and neuronal nicotinic acetylcholine receptors (nAChR) with highest affinity for neuronal alpha-7/CHRNA7 nAChRs. This is Muscarinic toxin-like protein from Bungarus multicinctus (Many-banded krait).